Here is a 351-residue protein sequence, read N- to C-terminus: MAIKVLVVDDSTLIRSLLGKMIESDPELSLVGMAADAYMAKDMVNQFRPDVITLDIEMPKVDGLTFLDRLMKARPTAVVMISALTEEGADATFNALALGAVDFIPKPKLDSPQGFNEYQDLILEKIKSAAKAKLLKALPSASTPVKSSIKPALSQRTVNTQLVAIGASTGGTEAILALLKQFPAVMPPIVITQHMPAGFTCTFADRLNKLTRFNVKQAEEGERLLPCYAYVAPGDQHLEIIKVGGSFKAKLSQGDKVSGHRPSVDVLFHSVAQYAGENATAVILTGMGKDGADGIEAIDMQGGKTFAQGEQSCVVFGMPKEAIKRGAIHHVVELPQLGDKLLQYLASVNRD.

In terms of domain architecture, Response regulatory spans 4 to 121; sequence KVLVVDDSTL…PQGFNEYQDL (118 aa). Asp-55 carries the 4-aspartylphosphate modification. The CheB-type methylesterase domain occupies 156–348; sequence RTVNTQLVAI…DKLLQYLASV (193 aa). Catalysis depends on residues Ser-168, His-194, and Asp-290.

Belongs to the CheB family. Phosphorylated by CheA. Phosphorylation of the N-terminal regulatory domain activates the methylesterase activity.

Its subcellular location is the cytoplasm. It carries out the reaction [protein]-L-glutamate 5-O-methyl ester + H2O = L-glutamyl-[protein] + methanol + H(+). The enzyme catalyses L-glutaminyl-[protein] + H2O = L-glutamyl-[protein] + NH4(+). Involved in chemotaxis. Part of a chemotaxis signal transduction system that modulates chemotaxis in response to various stimuli. Catalyzes the demethylation of specific methylglutamate residues introduced into the chemoreceptors (methyl-accepting chemotaxis proteins or MCP) by CheR. Also mediates the irreversible deamidation of specific glutamine residues to glutamic acid. In Shewanella oneidensis (strain ATCC 700550 / JCM 31522 / CIP 106686 / LMG 19005 / NCIMB 14063 / MR-1), this protein is Protein-glutamate methylesterase/protein-glutamine glutaminase 2.